The primary structure comprises 744 residues: Adenosylcobalamin-dependent ribonucleoside-triphosphate reductase (744 aa).

Cysteine 120 and cysteine 424 are disulfide-bonded. Residues 148–159 form an effector region-1 region; the sequence is SMPFSFLFDQLM. An effector region-2 region spans residues 169 to 318; sequence VDDNINQIPQ…ICNLIGKTVV (150 aa). Active-site residues include cysteine 413 and glutamate 415. The interval 570–631 is adenosylcobalamin-binding-1; that stretch reads FHYAGYLIQR…SKNFASAGTV (62 aa). The interval 690–729 is adenosylcobalamin-binding-2; the sequence is LKQAPKEPINKKAYEDRVAMITGDVKEVFENQNKDQKGLE.

It belongs to the class II ribonucleoside-triphosphate reductase family. In terms of assembly, monomer. It depends on adenosylcob(III)alamin as a cofactor.

It carries out the reaction a 2'-deoxyribonucleoside 5'-triphosphate + [thioredoxin]-disulfide + H2O = a ribonucleoside 5'-triphosphate + [thioredoxin]-dithiol. Allosterically regulated by ATP and dNTP. This is Adenosylcobalamin-dependent ribonucleoside-triphosphate reductase (rtpR) from Lactobacillus helveticus (strain DPC 4571).